The sequence spans 284 residues: Nitrogenase iron protein 1 (284 aa).

Position 17–24 (G17–S24) interacts with ATP. [4Fe-4S] cluster is bound at residue C105. R108 bears the ADP-ribosylarginine; by dinitrogenase reductase ADP-ribosyltransferase mark. Residue C140 coordinates [4Fe-4S] cluster.

This sequence belongs to the NifH/BchL/ChlL family. Homodimer. [4Fe-4S] cluster serves as cofactor. In terms of processing, the reversible ADP-ribosylation of Arg-108 inactivates the nitrogenase reductase and regulates nitrogenase activity.

The enzyme catalyses N2 + 8 reduced [2Fe-2S]-[ferredoxin] + 16 ATP + 16 H2O = H2 + 8 oxidized [2Fe-2S]-[ferredoxin] + 2 NH4(+) + 16 ADP + 16 phosphate + 6 H(+). The key enzymatic reactions in nitrogen fixation are catalyzed by the nitrogenase complex, which has 2 components: the iron protein and the molybdenum-iron protein. This is Nitrogenase iron protein 1 (nifH1) from Methanothermococcus thermolithotrophicus (Methanococcus thermolithotrophicus).